Reading from the N-terminus, the 603-residue chain is Sulfite reductase [NADPH] flavoprotein alpha-component (603 aa).

A Flavodoxin-like domain is found at 64–202; sequence ITLISASQTG…QAETWRAAIV (139 aa). FMN is bound by residues 70-75, 117-120, and 153-162; these read SQTGNA, STQG, and LGDSSYEHFA. The FAD-binding FR-type domain maps to 236–452; it reads EAPLTAHLAL…IEHNDNFRLP (217 aa). FAD is bound by residues Thr326, Leu360, 390–393, 408–410, Tyr414, and 423–426; these read RLYS, TVG, and GGAS. NADP(+) contacts are provided by residues 523–524, 529–533, and Asp565; these read SR and KIYVQ. An FAD-binding site is contributed by Tyr603.

The protein belongs to the NADPH-dependent sulphite reductase flavoprotein subunit CysJ family. This sequence in the N-terminal section; belongs to the flavodoxin family. In the C-terminal section; belongs to the flavoprotein pyridine nucleotide cytochrome reductase family. Alpha(8)-beta(8). The alpha component is a flavoprotein, the beta component is a hemoprotein. FAD serves as cofactor. FMN is required as a cofactor.

The enzyme catalyses hydrogen sulfide + 3 NADP(+) + 3 H2O = sulfite + 3 NADPH + 4 H(+). It participates in sulfur metabolism; hydrogen sulfide biosynthesis; hydrogen sulfide from sulfite (NADPH route): step 1/1. Component of the sulfite reductase complex that catalyzes the 6-electron reduction of sulfite to sulfide. This is one of several activities required for the biosynthesis of L-cysteine from sulfate. The flavoprotein component catalyzes the electron flow from NADPH -&gt; FAD -&gt; FMN to the hemoprotein component. The sequence is that of Sulfite reductase [NADPH] flavoprotein alpha-component from Sodalis glossinidius (strain morsitans).